A 420-amino-acid chain; its full sequence is Phosphoribosylamine--glycine ligase (420 aa).

The ATP-grasp domain occupies 108–314 (KQFMEKYAIP…FAALIDALLH (207 aa)). 134 to 195 (LNERGVPIVI…EDFLAGEEFS (62 aa)) lines the ATP pocket. Residues E284 and N286 each coordinate Mg(2+).

This sequence belongs to the GARS family. It depends on Mg(2+) as a cofactor. The cofactor is Mn(2+).

It carries out the reaction 5-phospho-beta-D-ribosylamine + glycine + ATP = N(1)-(5-phospho-beta-D-ribosyl)glycinamide + ADP + phosphate + H(+). Its pathway is purine metabolism; IMP biosynthesis via de novo pathway; N(1)-(5-phospho-D-ribosyl)glycinamide from 5-phospho-alpha-D-ribose 1-diphosphate: step 2/2. This is Phosphoribosylamine--glycine ligase from Listeria monocytogenes serovar 1/2a (strain ATCC BAA-679 / EGD-e).